Here is a 49-residue protein sequence, read N- to C-terminus: Large ribosomal subunit protein bL33B (49 aa).

This sequence belongs to the bacterial ribosomal protein bL33 family.

The protein is Large ribosomal subunit protein bL33B (rpmG2) of Lactococcus lactis subsp. cremoris (Streptococcus cremoris).